A 129-amino-acid polypeptide reads, in one-letter code: Glutaredoxin-like protein ECU08_1380 (129 aa).

A Glutaredoxin domain is found at 26-126 (EADYGEMVRR…PLLTQNREPV (101 aa)).

The protein belongs to the glutaredoxin family.

It localises to the cytoplasm. Has a glutathione-disulfide oxidoreductase activity in the presence of NADPH and glutathione reductase. Reduces low molecular weight disulfides and proteins. The protein is Glutaredoxin-like protein ECU08_1380 of Encephalitozoon cuniculi (strain GB-M1) (Microsporidian parasite).